The following is a 239-amino-acid chain: Pyridoxine 5'-phosphate synthase (239 aa).

Asn7 is a binding site for 3-amino-2-oxopropyl phosphate. 9–10 is a 1-deoxy-D-xylulose 5-phosphate binding site; that stretch reads DH. Arg18 is a 3-amino-2-oxopropyl phosphate binding site. His43 (proton acceptor) is an active-site residue. Residues Arg45 and His50 each coordinate 1-deoxy-D-xylulose 5-phosphate. Glu70 functions as the Proton acceptor in the catalytic mechanism. Residue Thr100 coordinates 1-deoxy-D-xylulose 5-phosphate. The active-site Proton donor is the His191. 3-amino-2-oxopropyl phosphate contacts are provided by residues Gly192 and 213–214; that span reads GH.

Belongs to the PNP synthase family. Homooctamer; tetramer of dimers.

It localises to the cytoplasm. The catalysed reaction is 3-amino-2-oxopropyl phosphate + 1-deoxy-D-xylulose 5-phosphate = pyridoxine 5'-phosphate + phosphate + 2 H2O + H(+). It participates in cofactor biosynthesis; pyridoxine 5'-phosphate biosynthesis; pyridoxine 5'-phosphate from D-erythrose 4-phosphate: step 5/5. In terms of biological role, catalyzes the complicated ring closure reaction between the two acyclic compounds 1-deoxy-D-xylulose-5-phosphate (DXP) and 3-amino-2-oxopropyl phosphate (1-amino-acetone-3-phosphate or AAP) to form pyridoxine 5'-phosphate (PNP) and inorganic phosphate. This is Pyridoxine 5'-phosphate synthase from Geobacter sp. (strain M21).